We begin with the raw amino-acid sequence, 411 residues long: Translation initiation factor 2 subunit gamma (411 aa).

Residues 9-203 (QAEVNIGMVG…AIQDFIPTPK (195 aa)) form the tr-type G domain. The segment at 18-25 (GHVDHGKT) is G1. Mg(2+) contacts are provided by D21, T25, G46, and S48. GTP is bound at residue 21 to 26 (DHGKTS). Residues 46–50 (GISIR) are G2. C61, C64, C73, and C76 together coordinate Zn(2+). The G3 stretch occupies residues 90 to 93 (DSPG). GTP contacts are provided by residues 146–149 (NKID) and 181–183 (SAH). A G4 region spans residues 146–149 (NKID). Residues 181-183 (SAH) are G5.

Belongs to the TRAFAC class translation factor GTPase superfamily. Classic translation factor GTPase family. EIF2G subfamily. Heterotrimer composed of an alpha, a beta and a gamma chain. Mg(2+) serves as cofactor.

The enzyme catalyses GTP + H2O = GDP + phosphate + H(+). Its function is as follows. eIF-2 functions in the early steps of protein synthesis by forming a ternary complex with GTP and initiator tRNA. The polypeptide is Translation initiation factor 2 subunit gamma (Methanocaldococcus jannaschii (strain ATCC 43067 / DSM 2661 / JAL-1 / JCM 10045 / NBRC 100440) (Methanococcus jannaschii)).